A 752-amino-acid chain; its full sequence is Pentatricopeptide repeat-containing protein At5g13270, chloroplastic (752 aa).

The N-terminal 80 residues, 1–80 (MTILTVQSSF…LQEMDKAGVS (80 aa)), are a transit peptide targeting the chloroplast. 15 PPR repeats span residues 47-81 (QGQV…GVSV), 82-116 (SSYS…IENP), 117-147 (SVLL…MSEL), 148-182 (NAVS…GDKP), 183-217 (PSSM…GLCS), 218-248 (NTSI…MAVK), 249-283 (KPVA…GVEW), 284-318 (DSFV…GLES), 319-349 (EVSV…IREP), 350-384 (NDVS…NASI), 386-420 (NSFT…SLIG), 421-451 (SQYG…MDNP), 452-486 (DIVA…GMKP), 487-522 (NSVT…NVAP), and 523-553 (TIDH…MPFE). Residues 558 to 633 (SWKCFLSGCW…ELSCSWIQEK (76 aa)) are type E motif. Residues 634 to 664 (GKIHRFIVGDKHHPQTQEIYEKLKEFDGFME) are type E(+) motif. A type DYW motif region spans residues 665–752 (GDMFQCNMTE…EGKCSCNDYW (88 aa)).

It belongs to the PPR family. PCMP-H subfamily.

The protein localises to the plastid. The protein resides in the chloroplast. This chain is Pentatricopeptide repeat-containing protein At5g13270, chloroplastic (PCMP-H90), found in Arabidopsis thaliana (Mouse-ear cress).